The chain runs to 77 residues: Conotoxin ArMKLT2-0122 (77 aa).

The first 22 residues, methionine 1–alanine 22, serve as a signal peptide directing secretion. Residues aspartate 23–lysine 44 constitute a propeptide that is removed on maturation. Cystine bridges form between cysteine 50–cysteine 65, cysteine 57–cysteine 68, and cysteine 64–cysteine 73.

It belongs to the conotoxin O1 superfamily. Expressed by the venom duct.

Its subcellular location is the secreted. This Conus arenatus (Sand-dusted cone) protein is Conotoxin ArMKLT2-0122.